The following is a 273-amino-acid chain: 2-dehydro-3-deoxyphosphooctonate aldolase (273 aa).

This sequence belongs to the KdsA family.

Its subcellular location is the cytoplasm. The catalysed reaction is D-arabinose 5-phosphate + phosphoenolpyruvate + H2O = 3-deoxy-alpha-D-manno-2-octulosonate-8-phosphate + phosphate. The protein operates within carbohydrate biosynthesis; 3-deoxy-D-manno-octulosonate biosynthesis; 3-deoxy-D-manno-octulosonate from D-ribulose 5-phosphate: step 2/3. It functions in the pathway bacterial outer membrane biogenesis; lipopolysaccharide biosynthesis. This Desulfatibacillum aliphaticivorans protein is 2-dehydro-3-deoxyphosphooctonate aldolase.